A 143-amino-acid polypeptide reads, in one-letter code: Holo-[acyl-carrier-protein] synthase (143 aa).

2 residues coordinate Mg(2+): Asp9 and Glu63.

The protein belongs to the P-Pant transferase superfamily. AcpS family. Requires Mg(2+) as cofactor.

Its subcellular location is the cytoplasm. It catalyses the reaction apo-[ACP] + CoA = holo-[ACP] + adenosine 3',5'-bisphosphate + H(+). Transfers the 4'-phosphopantetheine moiety from coenzyme A to a Ser of acyl-carrier-protein. In Burkholderia pseudomallei (strain 668), this protein is Holo-[acyl-carrier-protein] synthase.